Reading from the N-terminus, the 505-residue chain is Maturase K (505 aa).

The protein belongs to the intron maturase 2 family. MatK subfamily.

It is found in the plastid. The protein resides in the chloroplast. Usually encoded in the trnK tRNA gene intron. Probably assists in splicing its own and other chloroplast group II introns. In Gomphrena haageana (Haage's globe-amaranth), this protein is Maturase K.